The sequence spans 552 residues: CTP synthase (552 aa).

Residues 1–273 are amidoligase domain; it reads MSESKKNPET…LTPIARRFNM (273 aa). Ser-21 is a CTP binding site. Ser-21 lines the UTP pocket. Residues 22 to 27 and Asp-79 contribute to the ATP site; that span reads SLGKGI. The Mg(2+) site is built by Asp-79 and Glu-147. CTP is bound by residues 154 to 156, 194 to 199, and Lys-230; these read DIE and KTKPTQ. UTP contacts are provided by residues 194–199 and Lys-230; that span reads KTKPTQ. In terms of domain architecture, Glutamine amidotransferase type-1 spans 298–548; it reads TIAFVGKYLS…IQKSLELKKV (251 aa). L-glutamine is bound at residue Gly-359. The active-site Nucleophile; for glutamine hydrolysis is the Cys-386. L-glutamine is bound by residues 387 to 390, Glu-410, and Arg-478; that span reads LGMQ. Catalysis depends on residues His-521 and Glu-523.

This sequence belongs to the CTP synthase family. As to quaternary structure, homotetramer.

The catalysed reaction is UTP + L-glutamine + ATP + H2O = CTP + L-glutamate + ADP + phosphate + 2 H(+). It catalyses the reaction L-glutamine + H2O = L-glutamate + NH4(+). The enzyme catalyses UTP + NH4(+) + ATP = CTP + ADP + phosphate + 2 H(+). The protein operates within pyrimidine metabolism; CTP biosynthesis via de novo pathway; CTP from UDP: step 2/2. Its activity is regulated as follows. Allosterically activated by GTP, when glutamine is the substrate; GTP has no effect on the reaction when ammonia is the substrate. The allosteric effector GTP functions by stabilizing the protein conformation that binds the tetrahedral intermediate(s) formed during glutamine hydrolysis. Inhibited by the product CTP, via allosteric rather than competitive inhibition. Functionally, catalyzes the ATP-dependent amination of UTP to CTP with either L-glutamine or ammonia as the source of nitrogen. Regulates intracellular CTP levels through interactions with the four ribonucleotide triphosphates. In Wolinella succinogenes (strain ATCC 29543 / DSM 1740 / CCUG 13145 / JCM 31913 / LMG 7466 / NCTC 11488 / FDC 602W) (Vibrio succinogenes), this protein is CTP synthase.